The sequence spans 532 residues: Tyrosinase (532 aa).

Residues 1-22 (MESTTVLLAASTLLLVLHASYG) form the signal peptide. Topologically, residues 23-479 (QFPRACSTAQ…LEQARQIWQW (457 aa)) are lumenal, melanosome. Asn90, Asn115, and Asn165 each carry an N-linked (GlcNAc...) asparagine glycan. Residues His184, His206, and His215 each coordinate Cu cation. N-linked (GlcNAc...) asparagine glycosylation is found at Asn234 and Asn341. Positions 367 and 371 each coordinate Cu cation. N-linked (GlcNAc...) asparagine glycosylation occurs at Asn375. His394 is a binding site for Cu cation. Residues 480-500 (LLGAAVVGGLVTAVIATIISL) form a helical membrane-spanning segment. The Cytoplasmic portion of the chain corresponds to 501–532 (TCRRKRRTKTSEETRPLLMEAEDYHATYQSNL).

This sequence belongs to the tyrosinase family. Active tyrosinase has been found as a homodimer and homotetramer. The cofactor is Cu(2+). In terms of tissue distribution, frog skin.

Its subcellular location is the melanosome membrane. The catalysed reaction is 2 L-dopa + O2 = 2 L-dopaquinone + 2 H2O. The enzyme catalyses L-tyrosine + O2 = L-dopaquinone + H2O. With respect to regulation, activated by trypsin, chymotrypsin and subtilisin. Activated by alpha-chymotrypsin, thermolysin and Pronase. Inhibited by its product L-DOPA and tyrosine. Its function is as follows. This is a copper-containing oxidase that functions in the formation of pigments such as melanins and other polyphenolic compounds. Catalyzes the initial and rate limiting step in the cascade of reactions leading to melanin production from tyrosine. In addition to hydroxylating tyrosine to DOPA (3,4-dihydroxyphenylalanine), also catalyzes the oxidation of DOPA to DOPA-quinone. The protein is Tyrosinase of Pelophylax lessonae (Pool frog).